The chain runs to 462 residues: tRNA pseudouridine(32) synthase, mitochondrial (462 aa).

Residues 1–24 (MQRNNRLRNLFTVPVIMARQLKRN) constitute a mitochondrion transit peptide. Positions 127-188 (KLVDVFISEF…HEPPVTSRPI (62 aa)) constitute an S4 RNA-binding domain. Aspartate 238 is a catalytic residue.

This sequence belongs to the pseudouridine synthase RluA family.

It localises to the mitochondrion. The catalysed reaction is uridine(32) in tRNA = pseudouridine(32) in tRNA. Its function is as follows. Responsible for synthesis of pseudouridine from uracil-32 in mitochondrial transfer RNAs. This Saccharomyces cerevisiae (strain ATCC 204508 / S288c) (Baker's yeast) protein is tRNA pseudouridine(32) synthase, mitochondrial (PUS9).